We begin with the raw amino-acid sequence, 165 residues long: MAQITLRGNAINTVGELPAVGSPAPAFTLTGGDLGVISSDQFRGKSVLLNIFPSVDTPVCATSVRTFDERAAASGATVLCVSKDLPFAQKRFCGAEGTENVMPASAFRDSFGEDYGVTIADGPMAGLLARAIVVIGADGNVAYTELVPEIAQEPNYEAALAALGA.

The Thioredoxin domain occupies proline 18 to alanine 165. Cysteine 60 acts as the Cysteine sulfenic acid (-SOH) intermediate in catalysis. Cysteine 60 and cysteine 93 form a disulfide bridge.

Belongs to the peroxiredoxin family. Tpx subfamily. As to quaternary structure, homodimer.

The catalysed reaction is a hydroperoxide + [thioredoxin]-dithiol = an alcohol + [thioredoxin]-disulfide + H2O. Its function is as follows. Thiol-specific peroxidase that catalyzes the reduction of hydrogen peroxide and organic hydroperoxides to water and alcohols, respectively. Plays a role in cell protection against oxidative stress by detoxifying peroxides. This is Thiol peroxidase from Mycobacterium bovis (strain ATCC BAA-935 / AF2122/97).